We begin with the raw amino-acid sequence, 512 residues long: MQLKASEVYEALKQQLEDFDELSELSEVGYVISIGDGIAKVYGLSNAYSGEILQFSTGTKGIVFSLKDNLIEVVVIGSGDQIKQGSQVKRTQTSLKVPTGKELLGRVVDAIGNPIDGKGEFINPTYLDVEVKAPSVMCRDSVNEPMYTGIKAIDALIPIGKGQRELIIGDRQTGKTAIAIDIILNQKRFHLSDQEKEKVYCIYVAIGQKRSTVAQLVKKLQETGAMAYTTVVLSSASDAASLQYLAPYTGCAIGEYFRDNCMHALVIYDDLSKHAIAYRQISLLLRRPPAREAYPGDVFYLHSRLLERAAKLNKAKGEGSLTALPIVETQNSDVSAYIPTNIISITDGQIFLESELFYKGIKPALNVGISVSRVGAAAQIKAMKDIASSVKLELAQYHEMEAFSQFGADLDSSSMQLINRGRRLSELLKQSQYCPFPVEEQIIVLFAGINGYLDKIAVSKVKEFENNMLEYFRIHNPDIMNEIINTKKITEIISSKLHQILQEFVKSIEQCS.

169 to 176 contacts ATP; sequence GDRQTGKT.

The protein belongs to the ATPase alpha/beta chains family. In terms of assembly, F-type ATPases have 2 components, CF(1) - the catalytic core - and CF(0) - the membrane proton channel. CF(1) has five subunits: alpha(3), beta(3), gamma(1), delta(1), epsilon(1). CF(0) has three main subunits: a(1), b(2) and c(9-12). The alpha and beta chains form an alternating ring which encloses part of the gamma chain. CF(1) is attached to CF(0) by a central stalk formed by the gamma and epsilon chains, while a peripheral stalk is formed by the delta and b chains.

The protein localises to the cell inner membrane. The enzyme catalyses ATP + H2O + 4 H(+)(in) = ADP + phosphate + 5 H(+)(out). Produces ATP from ADP in the presence of a proton gradient across the membrane. The alpha chain is a regulatory subunit. The chain is ATP synthase subunit alpha from Orientia tsutsugamushi (strain Boryong) (Rickettsia tsutsugamushi).